Consider the following 310-residue polypeptide: Protein N-terminal asparagine amidohydrolase (310 aa).

As to quaternary structure, monomer.

The protein localises to the cytoplasm. It catalyses the reaction N-terminal L-asparaginyl-[protein] + H2O + H(+) = N-terminal L-aspartyl-[protein] + NH4(+). Inhibited by micromolar concentrations of copper and zinc ions. In terms of biological role, N-terminal asparagine deamidase that mediates deamidation of N-terminal asparagine residues to aspartate. Required for the ubiquitin-dependent turnover of intracellular proteins that initiate with Met-Asn. These proteins are acetylated on the retained initiator methionine and can subsequently be modified by the removal of N-acetyl methionine by acylaminoacid hydrolase (AAH). Conversion of the resulting N-terminal asparagine to aspartate by NTAN1/PNAD renders the protein susceptible to arginylation, polyubiquitination and degradation as specified by the N-end rule. This enzyme does not act on substrates with internal or C-terminal asparagines and does not act on glutamine residues in any position, nor on acetylated N-terminal peptidyl Asn. In Homo sapiens (Human), this protein is Protein N-terminal asparagine amidohydrolase (NTAN1).